The primary structure comprises 428 residues: Histidinol dehydrogenase (428 aa).

Residues serine 234, glutamine 256, and histidine 259 each contribute to the substrate site. Positions 256 and 259 each coordinate Zn(2+). Catalysis depends on proton acceptor residues glutamate 323 and histidine 324. The substrate site is built by histidine 324, aspartate 357, glutamate 411, and histidine 416. Aspartate 357 contacts Zn(2+). Histidine 416 provides a ligand contact to Zn(2+).

The protein belongs to the histidinol dehydrogenase family. Zn(2+) is required as a cofactor.

It catalyses the reaction L-histidinol + 2 NAD(+) + H2O = L-histidine + 2 NADH + 3 H(+). The protein operates within amino-acid biosynthesis; L-histidine biosynthesis; L-histidine from 5-phospho-alpha-D-ribose 1-diphosphate: step 9/9. In terms of biological role, catalyzes the sequential NAD-dependent oxidations of L-histidinol to L-histidinaldehyde and then to L-histidine. The polypeptide is Histidinol dehydrogenase (Campylobacter jejuni (strain RM1221)).